The primary structure comprises 503 residues: Maturase K (503 aa).

This sequence belongs to the intron maturase 2 family. MatK subfamily.

The protein resides in the plastid. The protein localises to the chloroplast. Its function is as follows. Usually encoded in the trnK tRNA gene intron. Probably assists in splicing its own and other chloroplast group II introns. This Diospyros kaki (Kaki persimmon) protein is Maturase K.